The sequence spans 282 residues: Pantothenate synthetase (282 aa).

30-37 (MGFLHDGH) provides a ligand contact to ATP. His-37 acts as the Proton donor in catalysis. Residue Gln-60 coordinates (R)-pantoate. Gln-60 provides a ligand contact to beta-alanine. 146–149 (GQKD) lines the ATP pocket. A (R)-pantoate-binding site is contributed by Gln-152. Residues Ile-175 and 183–186 (KSSR) each bind ATP.

This sequence belongs to the pantothenate synthetase family. Homodimer.

The protein localises to the cytoplasm. It carries out the reaction (R)-pantoate + beta-alanine + ATP = (R)-pantothenate + AMP + diphosphate + H(+). It participates in cofactor biosynthesis; (R)-pantothenate biosynthesis; (R)-pantothenate from (R)-pantoate and beta-alanine: step 1/1. Catalyzes the condensation of pantoate with beta-alanine in an ATP-dependent reaction via a pantoyl-adenylate intermediate. The sequence is that of Pantothenate synthetase from Campylobacter jejuni subsp. jejuni serotype O:6 (strain 81116 / NCTC 11828).